Reading from the N-terminus, the 264-residue chain is MVKSHIGSWILVLFVAMWSDVGLCKKRPKPGGGWNTGGSRYPGPGSPGGNRYPPQGGGGWGQPHGGGWGQPHGGGWGQPHGGGWGQPHGGGWGQPHGGGGWGQGGTHGQWNKPSKPKTNMKHVAGAAAAGAVVGGLGGYMLGSAMSRPLIHFGSDYEDRYYRENMHRYPNQVYYRPVDQYSNQNNFVHDCVNITVKEHTVTTTTKGENFTETDIKMMERVVEQMCITQYQRESQAYYQRGASVILFSSPPVILLISFLIFLIVG.

The N-terminal stretch at 1–24 (MVKSHIGSWILVLFVAMWSDVGLC) is a signal peptide. The interval 25–241 (KKRPKPGGGW…ESQAYYQRGA (217 aa)) is interaction with GRB2, ERI3 and SYN1. A disordered region spans residues 28–118 (PKPGGGWNTG…QWNKPSKPKT (91 aa)). A compositionally biased stretch (low complexity) spans 37–54 (GGSRYPGPGSPGGNRYPP). 6 tandem repeats follow at residues 54-62 (PQGGGGWGQ), 63-70 (PHGGGWGQ), 71-78 (PHGGGWGQ), 79-86 (PHGGGWGQ), 87-94 (PHGGGWGQ), and 95-103 (PHGGGGWGQ). Positions 54–103 (PQGGGGWGQPHGGGWGQPHGGGWGQPHGGGWGQPHGGGWGQPHGGGGWGQ) are 6 X 8 AA tandem repeats of P-H-G-G-G-W-G-Q. Residues 55–107 (QGGGGWGQPHGGGWGQPHGGGWGQPHGGGWGQPHGGGWGQPHGGGGWGQGGTH) are compositionally biased toward gly residues. Cu(2+)-binding residues include His72, Gly73, Gly74, His80, Gly81, Gly82, His88, Gly89, Gly90, His96, and Gly98. A disulfide bond links Cys190 and Cys225. Asn192 and Asn208 each carry an N-linked (GlcNAc...) asparagine glycan. Ala241 is lipidated: GPI-anchor amidated alanine. A propeptide spans 242 to 264 (SVILFSSPPVILLISFLIFLIVG) (removed in mature form).

This sequence belongs to the prion family. Monomer and homodimer. Has a tendency to aggregate into amyloid fibrils containing a cross-beta spine, formed by a steric zipper of superposed beta-strands. Soluble oligomers may represent an intermediate stage on the path to fibril formation. Copper binding may promote oligomerization. Interacts with GRB2, APP, ERI3/PRNPIP and SYN1. Mislocalized cytosolically exposed PrP interacts with MGRN1; this interaction alters MGRN1 subcellular location and causes lysosomal enlargement. Interacts with KIAA1191.

It localises to the cell membrane. The protein localises to the golgi apparatus. Its primary physiological function is unclear. Has cytoprotective activity against internal or environmental stresses. May play a role in neuronal development and synaptic plasticity. May be required for neuronal myelin sheath maintenance. May play a role in iron uptake and iron homeostasis. Soluble oligomers are toxic to cultured neuroblastoma cells and induce apoptosis (in vitro). Association with GPC1 (via its heparan sulfate chains) targets PRNP to lipid rafts. Also provides Cu(2+) or Zn(2+) for the ascorbate-mediated GPC1 deaminase degradation of its heparan sulfate side chains. The protein is Major prion protein (PRNP) of Ailuropoda melanoleuca (Giant panda).